The primary structure comprises 464 residues: Glycine receptor subunit alpha-3 (464 aa).

The signal sequence occupies residues 1-33 (MAHVRHFRTLLSGFYFWEAALLLSLVATKETNS). Over 34–255 (ARSRSAPMSP…RFHLERQMGY (222 aa)) the chain is Extracellular. Asparagine 71 is a glycosylation site (N-linked (GlcNAc...) asparagine). A disulfide bond links cysteine 171 and cysteine 185. Zn(2+)-binding residues include glutamate 225 and aspartate 227. An intrachain disulfide couples cysteine 231 to cysteine 242. 235–240 (YNTGKF) is a binding site for strychnine. Position 248 (histidine 248) interacts with Zn(2+). Residues 256–277 (YLIQMYIPSLLIVILSWVSFWI) traverse the membrane as a helical segment. Over 278–282 (NMDAA) the chain is Cytoplasmic. Residues 283 to 303 (PARVALGITTVLTMTTQSSGS) form a helical membrane-spanning segment. At 304-314 (RASLPKVSYVK) the chain is on the extracellular side. Residues 315-335 (AIDIWMAVCLLFVFSALLEYA) form a helical membrane-spanning segment. Over 336–430 (AVNFVSRQHK…FIDRAKKIDT (95 aa)) the chain is Cytoplasmic. Serine 370 is modified (phosphoserine). The residue at position 379 (serine 379) is a Phosphoserine; by PKA. Residues 431–451 (ISRACFPLAFLIFNIFYWVIY) form a helical membrane-spanning segment. The Extracellular portion of the chain corresponds to 452-464 (KILRHEDIHHQQD).

The protein belongs to the ligand-gated ion channel (TC 1.A.9) family. Glycine receptor (TC 1.A.9.3) subfamily. GLRA3 sub-subfamily. In terms of assembly, homopentamer (in vitro). Heteropentamer composed of GLRA3 and GLRB. Both homopentamers and heteropentamers form functional ion channels, but their characteristics are subtly different. In terms of processing, phosphorylated by PKA; this causes down-regulation of channel activity.

It localises to the postsynaptic cell membrane. It is found in the perikaryon. The protein resides in the cell projection. Its subcellular location is the dendrite. The protein localises to the synapse. It localises to the cell membrane. The enzyme catalyses chloride(in) = chloride(out). With respect to regulation, low levels of Zn(2+) ions (1 uM) increase glycine sensitivity and decrease the glycine concentration required for half-maximal channel activity. Channel activity is strongly enhanced by ethanol. Inhibited by picrotoxin. Inhibited by prostaglandin E2, probably via PKA-mediated phosphorylation at Ser-379. Functionally, glycine receptors are ligand-gated chloride channels. Channel opening is triggered by extracellular glycine. Channel characteristics depend on the subunit composition; heteropentameric channels display faster channel closure. Plays an important role in the down-regulation of neuronal excitability. Contributes to the generation of inhibitory postsynaptic currents. Contributes to increased pain perception in response to increased prostaglandin E2 levels. Plays a role in cellular responses to ethanol. The chain is Glycine receptor subunit alpha-3 (Glra3) from Rattus norvegicus (Rat).